The sequence spans 272 residues: Prephenate dehydratase (272 aa).

The region spanning Ala4–Lys179 is the Prephenate dehydratase domain. The ACT domain occupies Ile194–Pro269.

As to quaternary structure, homodimer.

The catalysed reaction is prephenate + H(+) = 3-phenylpyruvate + CO2 + H2O. The protein operates within amino-acid biosynthesis; L-phenylalanine biosynthesis; phenylpyruvate from prephenate: step 1/1. Its activity is regulated as follows. Inhibited by L-phenylalanine but not by L-tyrosine or L-tryptophan. The chain is Prephenate dehydratase (pheA) from Methanocaldococcus jannaschii (strain ATCC 43067 / DSM 2661 / JAL-1 / JCM 10045 / NBRC 100440) (Methanococcus jannaschii).